Reading from the N-terminus, the 287-residue chain is Aquaporin PIP2-1 (287 aa).

Met1 is modified (N-acetylmethionine). Topologically, residues 2–39 (AKDVEAVPGEGFQTRDYQDPPPAPFIDGAELKKWSFYR) are cytoplasmic. Position 3 is an N6,N6-dimethyllysine; partial (Lys3). A helical membrane pass occupies residues 40-60 (AVIAEFVATLLFLYITVLTVI). The Extracellular portion of the chain corresponds to 61-83 (GYKIQSDTDAGGVDCGGVGILGI). The chain crosses the membrane as a helical span at residues 84-104 (AWAFGGMIFILVYCTAGISGG). Residues 105-125 (HINPAVTFGLFLARKVSLPRA) lie on the Cytoplasmic side of the membrane. Residues 107–109 (NPA) carry the NPA 1 motif. A helical membrane pass occupies residues 126–146 (LLYIIAQCLGAICGVGFVKAF). Residues 147–167 (QSSYYTRYGGGANSLADGYST) are Extracellular-facing. Residues 168–188 (GTGLAAEIIGTFVLVYTVFSA) form a helical membrane-spanning segment. Residues 189-201 (TDPKRSARDSHVP) are Cytoplasmic-facing. A helical membrane pass occupies residues 202–222 (VLAPLPIGFAVFMVHLATIPI). Topologically, residues 223–249 (TGTGINPARSFGAAVIYNKSKPWDDHW) are extracellular. Positions 228–230 (NPA) match the NPA 2 motif. A helical transmembrane segment spans residues 250–270 (IFWVGPFIGAAIAAFYHQFVL). Topologically, residues 271–287 (RASGSKSLGSFRSAANV) are cytoplasmic. 2 positions are modified to phosphoserine: Ser280 and Ser283.

This sequence belongs to the MIP/aquaporin (TC 1.A.8) family. PIP (TC 1.A.8.11) subfamily. In terms of processing, ubiquitinated by RMA1, leading to proteasomal degradation. The phosphorylation at Ser-280 and Ser-283 is altered by salt (NaCl) and hydrogen peroxide H(2)O(2) treatments. Phosphorylation of Ser-283 is required for plasma membrane targeting. Predominantly expressed in roots and green siliques. Also expressed at lower level above ground and in flower buds.

It localises to the cell membrane. In terms of biological role, water channel required to facilitate the transport of water across cell membrane. Probably involved in root water uptake. Its function is impaired by Hg(2+). This Arabidopsis thaliana (Mouse-ear cress) protein is Aquaporin PIP2-1 (PIP2-1).